The following is a 281-amino-acid chain: DegV domain-containing protein YqaC (281 aa).

Residues 3 to 279 (LAVITDSSAD…LNTVAYGISP (277 aa)) form the DegV domain. Residues T60 and S93 each contribute to the hexadecanoate site.

May bind long-chain fatty acids, such as palmitate, and may play a role in lipid transport or fatty acid metabolism. The chain is DegV domain-containing protein YqaC (yqaC) from Lactococcus lactis subsp. lactis (strain IL1403) (Streptococcus lactis).